The chain runs to 208 residues: FMN-dependent NADH:quinone oxidoreductase (208 aa).

Residues 17 to 19 (SNS), 99 to 102 (MWNL), and 143 to 146 (SRGG) each bind FMN.

The protein belongs to the azoreductase type 1 family. As to quaternary structure, homodimer. FMN is required as a cofactor.

The catalysed reaction is 2 a quinone + NADH + H(+) = 2 a 1,4-benzosemiquinone + NAD(+). It carries out the reaction N,N-dimethyl-1,4-phenylenediamine + anthranilate + 2 NAD(+) = 2-(4-dimethylaminophenyl)diazenylbenzoate + 2 NADH + 2 H(+). Its function is as follows. Quinone reductase that provides resistance to thiol-specific stress caused by electrophilic quinones. Also exhibits azoreductase activity. Catalyzes the reductive cleavage of the azo bond in aromatic azo compounds to the corresponding amines. This is FMN-dependent NADH:quinone oxidoreductase from Staphylococcus aureus (strain MSSA476).